We begin with the raw amino-acid sequence, 304 residues long: Glutaminase (304 aa).

Substrate-binding residues include S63, N114, E158, N165, Y189, Y240, and V258.

Belongs to the glutaminase family. Homotetramer.

It carries out the reaction L-glutamine + H2O = L-glutamate + NH4(+). The chain is Glutaminase from Shewanella loihica (strain ATCC BAA-1088 / PV-4).